A 207-amino-acid chain; its full sequence is Small ribosomal subunit protein uS4 (207 aa).

Residues 97–159 (SRLDNVCYRM…AKSQLRIQAA (63 aa)) enclose the S4 RNA-binding domain.

This sequence belongs to the universal ribosomal protein uS4 family. In terms of assembly, part of the 30S ribosomal subunit. Contacts protein S5. The interaction surface between S4 and S5 is involved in control of translational fidelity.

Functionally, one of the primary rRNA binding proteins, it binds directly to 16S rRNA where it nucleates assembly of the body of the 30S subunit. In terms of biological role, with S5 and S12 plays an important role in translational accuracy. The protein is Small ribosomal subunit protein uS4 of Halorhodospira halophila (strain DSM 244 / SL1) (Ectothiorhodospira halophila (strain DSM 244 / SL1)).